The chain runs to 464 residues: FERM domain-containing protein 8 (464 aa).

N-acetylmethionine is present on methionine 1. The tract at residues methionine 1–valine 22 is disordered. Position 24 is a phosphoserine (serine 24). The FERM domain occupies alanine 30–glutamate 376. The tract at residues glutamate 376–serine 408 is disordered. Phosphoserine is present on residues serine 383, serine 387, and serine 408. Threonine 419 carries the phosphothreonine modification. Serine 439 and serine 446 each carry phosphoserine.

In terms of assembly, interacts with iRhom1/RHBDF1 and iRhom2/RHBDF2 (via cytoplasmic N-termini); this interaction leads to mutual protein stabilization. Interacts with ADAM17; this interaction is indirect and mediated by iRhom proteins. Interacts with LRP6; this interaction affects LRP6-binding to AXIN1. In terms of tissue distribution, widely expressed, with high expression in heart and spleen.

The protein localises to the cytoplasm. Its subcellular location is the cytosol. It is found in the cell membrane. Promotes the cell surface stability of iRhom1/RHBDF1 and iRhom2/RHBDF2 and prevents their degradation via the endolysosomal pathway. By acting on iRhoms, involved in ADAM17-mediated shedding of TNF, amphiregulin/AREG, HBEGF and TGFA from the cell surface. Negatively regulates Wnt signaling, possibly by antagonizing the recruitment of AXIN1 to LRP6. In Homo sapiens (Human), this protein is FERM domain-containing protein 8 (FRMD8).